The following is a 243-amino-acid chain: Uridylate kinase (243 aa).

18–21 is an ATP binding site; sequence KLGG. Gly-59 is a binding site for UMP. ATP-binding residues include Gly-60 and Arg-64. UMP contacts are provided by residues Asp-79 and 140–147; that span reads MGMPYFST. The ATP site is built by Tyr-173 and Asp-176.

It belongs to the UMP kinase family. As to quaternary structure, homohexamer.

The protein localises to the cytoplasm. The enzyme catalyses UMP + ATP = UDP + ADP. It functions in the pathway pyrimidine metabolism; CTP biosynthesis via de novo pathway; UDP from UMP (UMPK route): step 1/1. With respect to regulation, inhibited by UTP. Functionally, catalyzes the reversible phosphorylation of UMP to UDP. This chain is Uridylate kinase, found in Corynebacterium glutamicum (strain R).